Here is a 134-residue protein sequence, read N- to C-terminus: Protein NrdI (134 aa).

The protein belongs to the NrdI family.

Functionally, probably involved in ribonucleotide reductase function. This chain is Protein NrdI, found in Rhizobium etli (strain CIAT 652).